We begin with the raw amino-acid sequence, 854 residues long: MKNNDKLDSHTPMMQQYLRLKAQHPEILLFYRMGDFYELFYSDAKRASQLLDISLTKRGASAGEPIPMAGVPYHSIENYLAKLVQLGESAAICEQIGDPATSKGPVERKVVRIVTPGTISDEALLQERQDNLLAAIWQDAKGFGYATLDISSGRFRVAEPADLETMAAELQRTNPAELLYPENFEPMSLIEHRHGLRRRPLWEFELDTAKQQLNLQFGTRDLIGFGVEQAHLALRAAGCLLQYVKDTQRTSLPHIRGLTMERQQDGIIMDAATRRNLELTQNLSGGSENTLAAILDCSVTPMGSRMLKRWLHMPIRDIRVLTDRQQAIGGLQDIAAELQTPLRQVGDLERILARLALRTARPRDLARMRHAFQQLPEIHRLLQPIDVPHVQNLLSQVGQFDELQDLLERAIVETPPVLVRDGGVIASGYNAELDEWRALADGATDYLDRLEIREREKLGLDTLKVGFNGVHGYYIQVSRGQSHLVPIHYVRRQTLKNAERYIIPELKEYEDKVLTSKGKALAIEKGLYEEIFDLLLPHLPELQLSANALAELDVLANLAERAETLNYSCPTLSDKPGIKIMGGRHPVVEQVLKEPFISNPLTLSPQRRMLIITGPNMGGKSTYMRQTALIVLLAHLGSYVPADQATIGPIDRIFTRVGAADDLASGRSTFMVEMTETANILHNATEQSLVLMDEIGRGTSTYDGLSLAWACAENLASRIKAMTLFATHYFELTTLPEKMEGVVNVHLDALEHGETIAFMHSVQEGAASKSYGLAVAALAGVPRDVIKRARQKLKELESLSNNAAASTIDGSQMTLLNEEIPPAVEALEALEALDPDSLSPRQALEWIYRLKNMV.

614–621 lines the ATP pocket; sequence GPNMGGKS.

This sequence belongs to the DNA mismatch repair MutS family.

In terms of biological role, this protein is involved in the repair of mismatches in DNA. It is possible that it carries out the mismatch recognition step. This protein has a weak ATPase activity. The protein is DNA mismatch repair protein MutS of Yersinia pestis bv. Antiqua (strain Antiqua).